Here is a 241-residue protein sequence, read N- to C-terminus: GLIPR1-like protein 1 (241 aa).

The signal sequence occupies residues methionine 1–serine 22. One can recognise an SCP domain in the interval leucine 39–tyrosine 172. Residue serine 220 is the site of GPI-anchor amidated serine attachment. A propeptide spans glycine 221–phenylalanine 241 (removed in mature form).

The protein belongs to the CRISP family. As to quaternary structure, part of a oolemmal binding multimeric complex (IZUMO1 complex) composed at least of IZUMO1 and GLIPR1L1; the complex assemblage is influenced by the maturation status of the male germ cell. Interacts with IZUMO1. N-glycosylated. N-glycosylation decreases during the transit in the caput. As to expression, highly expressed in testis, where it localizes to round and elongating spermatids and differentiated spermatozoa in the seminiferous tubules and epididymis (at protein level).

The protein localises to the cytoplasmic vesicle. The protein resides in the secretory vesicle. Its subcellular location is the acrosome. It is found in the cell membrane. It localises to the membrane raft. Required for optimal fertilization at the stage of sperm-oocyte fusion, plays a role in optimizing acrosome function, the translocation of IZUMO1 during the acrosome reaction and the fertilization process. Component of epididymosomes, one type of membranous microvesicules which mediate the transfer of lipids and proteins to spermatozoa plasma membrane during epididymal maturation. Also a component of the CD9-positive microvesicules found in the cauda region. This is GLIPR1-like protein 1 from Bos taurus (Bovine).